The primary structure comprises 1029 residues: Multiple C2 domain and transmembrane region protein 6 (1029 aa).

One can recognise a C2 1 domain in the interval 1–111; it reads MNKLVVEIVD…SGVQRYPLDK (111 aa). Residues 187 to 224 are disordered; sequence TKKKEKESRTFHSIGAHAGGGGGAPPMSQAKQAYPPPP. C2 domains lie at 277 to 398, 437 to 562, and 605 to 727; these read RSSG…PQWY, RVSH…PRWF, and FSSD…THFY. Residues aspartate 310, aspartate 316, aspartate 363, aspartate 365, and aspartate 371 each coordinate Ca(2+). The next 2 helical transmembrane spans lie at 864-884 and 976-996; these read LILV…LFVI and FALI…AIII.

The protein belongs to the MCTP family. Ca(2+) is required as a cofactor. In terms of tissue distribution, expressed in the vascular tissues of cotyledons and rosette leaves. Accumulates in roots caps and shoot apical meristems (SAMs). Observed in flowers.

It localises to the cell membrane. It is found in the cytoplasm. The protein localises to the endosome membrane. In terms of biological role, regulates flowering time under long days. May function as a signaling molecule by regulating the trafficking of other regulators. The chain is Multiple C2 domain and transmembrane region protein 6 from Arabidopsis thaliana (Mouse-ear cress).